A 55-amino-acid chain; its full sequence is Mitochondrial import receptor subunit TOM7 homolog (55 aa).

Over methionine 1–glutamine 20 the chain is Cytoplasmic. A helical membrane pass occupies residues phenylalanine 21 to phenylalanine 36. The Mitochondrial intermembrane portion of the chain corresponds to lysine 37–glycine 55.

This sequence belongs to the Tom7 family. In terms of assembly, forms part of the preprotein translocase complex of the outer mitochondrial membrane (TOM complex) which consists of at least 7 different proteins (TOMM5, TOMM6, TOMM7, TOMM20, TOMM22, TOMM40 and TOMM70).

Its subcellular location is the mitochondrion outer membrane. Its function is as follows. Required for assembly and stability of the TOM complex. Positive regulator of PRKN translocation to damaged mitochondria. Acts probably by stabilizing PINK1 on the outer membrane of depolarized mitochondria. The chain is Mitochondrial import receptor subunit TOM7 homolog (TOMM7) from Bos taurus (Bovine).